Reading from the N-terminus, the 77-residue chain is Sec-independent protein translocase protein TatA (77 aa).

A helical transmembrane segment spans residues 1–21 (MGSLSIWHWILVIAVVLLLFG). A compositionally biased stretch (basic and acidic residues) spans 42-60 (GMQDDDKPADKPEPAKSIE). The disordered stretch occupies residues 42 to 77 (GMQDDDKPADKPEPAKSIEHNAAPTAARSDVGSKAV).

This sequence belongs to the TatA/E family. The Tat system comprises two distinct complexes: a TatABC complex, containing multiple copies of TatA, TatB and TatC subunits, and a separate TatA complex, containing only TatA subunits. Substrates initially bind to the TatABC complex, which probably triggers association of the separate TatA complex to form the active translocon.

The protein localises to the cell inner membrane. In terms of biological role, part of the twin-arginine translocation (Tat) system that transports large folded proteins containing a characteristic twin-arginine motif in their signal peptide across membranes. TatA could form the protein-conducting channel of the Tat system. The protein is Sec-independent protein translocase protein TatA of Bradyrhizobium diazoefficiens (strain JCM 10833 / BCRC 13528 / IAM 13628 / NBRC 14792 / USDA 110).